We begin with the raw amino-acid sequence, 593 residues long: MKTLETRKEKKAQGKVLKAFGNLLQVTFEGNIRQGEVAMVHVDNLQLKSEVIEILGNQAKIQVFEDTKGVRLGSLVSFTGDLLEAELGPGLLSSIFDGLQNPLVDVADQAGLFLPKGIYLSALDRQRKWDFESSAKVGDVLFRGDRIGSTKEGRFHHFIMVPFSLYGKYRLTWVINSGSYTVDTVVAKAIDESGQEHSFTMVQKWPVKNALIHGEKIKPTKMMDTGERIIDTQFPLMKGGTFCTPGPFGAGKTVLQHHLSKYAAVDIVLFVACGERAGEVVEVLREFPHLIDPHTDEALMKRTVIICNTSSMPVAARESSIYMGITIAEYYRQMGLDVLVLADSTSRWAQALREMSGRLEEIPGEEAFPAYLSSRIAEFYERSGVVSLRHGKPGSITIGGAVSPAGGNFEEPVTQATLSVVGAFLGLSRARSDSRRYPAIDPLLSWSKYVDTVGNELSHQVDGWDQMVKRARHILFNGNEIGKRMEVVGEEGISMEDMLTYLKAELYDFSYLQQNAFDKEDAYCPLKRQIALFQLINQIFDTTFDFHTHDQAREFFLDLQNRIKNMNFISFDTEQYRKVFAEIKSIIEQQSRK.

246–253 (GPFGAGKT) serves as a coordination point for ATP.

It belongs to the ATPase alpha/beta chains family.

The enzyme catalyses ATP + H2O + 4 H(+)(in) = ADP + phosphate + 5 H(+)(out). Produces ATP from ADP in the presence of a proton gradient across the membrane. The V-type alpha chain is a catalytic subunit. The polypeptide is V-type ATP synthase alpha chain (Protochlamydia amoebophila (strain UWE25)).